Here is a 2325-residue protein sequence, read N- to C-terminus: Centriolin (2325 aa).

Positions 1–33 are disordered; the sequence is MKKGSQQKIFSKAKIPSSSHSPIPSSMSNMRSR. Low complexity predominate over residues 16-33; sequence PSSSHSPIPSSMSNMRSR. LRR repeat units follow at residues 126–147, 148–169, 170–191, and 194–215; these read KLEV…DKLL, KLRE…ENMC, NLQK…LGKK, and SLRV…SKLK. One can recognise an LRRCT domain in the interval 228–266; that stretch reads NPVVTLPHYLQFTIFHLRSLESLEGQPVTTQDRQEAFER. Coiled coils occupy residues 267–343 and 435–799; these read FSLE…IELT and LDTQ…LNHV. A Phosphoserine modification is found at Ser-831. A coiled-coil region spans residues 851-1101; that stretch reads LARSKWERDE…ARLQNVLDLT (251 aa). The disordered stretch occupies residues 1150–1241; that stretch reads PSSKVSSHSS…DQEEPPFVPP (92 aa). Residues 1224 to 1235 show a composition bias toward acidic residues; that stretch reads SQEESELDDQEE. Residues 1317–2255 are a coiled coil; that stretch reads EHHNLENEVS…DRLKAQLRHC (939 aa). Ser-1475 carries the post-translational modification Phosphoserine. Residues 1948 to 2118 are required for centrosome localization; that stretch reads MMFQRLQKER…ELVAQDNHER (171 aa). The sufficient for interaction with HOOK2 stretch occupies residues 1985 to 2325; it reads QKSKLDQVLS…QNQEKNASAR (341 aa). A disordered region spans residues 2288–2325; it reads VTSTSADSASSPSLSQLESSLTEDSQLGQNQEKNASAR. The span at 2290 to 2314 shows a compositional bias: low complexity; that stretch reads STSADSASSPSLSQLESSLTEDSQL. A compositionally biased stretch (polar residues) spans 2315–2325; sequence GQNQEKNASAR.

Interacts with HOOK2. Interacts with EXOC6 and SNAPIN. Associates with the exocyst complex. Widely expressed with highest levels in testis and trachea.

The protein localises to the cytoplasm. Its subcellular location is the cytoskeleton. It is found in the microtubule organizing center. It localises to the centrosome. The protein resides in the midbody. The protein localises to the midbody ring. Functionally, involved in cell cycle progression and cytokinesis. During the late steps of cytokinesis, anchors exocyst and SNARE complexes at the midbody, thereby allowing secretory vesicle-mediated abscission. The chain is Centriolin (CNTRL) from Homo sapiens (Human).